Consider the following 438-residue polypeptide: Proline--tRNA ligase (438 aa).

This sequence belongs to the class-II aminoacyl-tRNA synthetase family. ProS type 2 subfamily. Homodimer.

It is found in the cytoplasm. The catalysed reaction is tRNA(Pro) + L-proline + ATP = L-prolyl-tRNA(Pro) + AMP + diphosphate. In terms of biological role, catalyzes the attachment of proline to tRNA(Pro) in a two-step reaction: proline is first activated by ATP to form Pro-AMP and then transferred to the acceptor end of tRNA(Pro). This chain is Proline--tRNA ligase, found in Rhodopseudomonas palustris (strain TIE-1).